We begin with the raw amino-acid sequence, 771 residues long: Hyperosmolality-gated Ca2+ permeable channel 1.2 (771 aa).

The Extracellular segment spans residues 1 to 4; that stretch reads MATL. A helical membrane pass occupies residues 5-27; sequence QDIGVSAGINILSAFVFFIIFAV. The Cytoplasmic segment spans residues 28–100; the sequence is LRLQPFNDRV…AGLDSVVYLR (73 aa). A helical membrane pass occupies residues 101–125; it reads IYWLGLKIFTPIAVLAWAVLVPVNW. At 126 to 156 the chain is on the extracellular side; the sequence is TNNTLEMAKQLRNVTSSDIDKLSVSNIPEYS. Residues 157–178 traverse the membrane as a helical segment; that stretch reads MRFWTHIVMAYAFTIWTCYVLM. The Cytoplasmic segment spans residues 179 to 374; sequence KEYETIANMR…AIPYVSLTVR (196 aa). Residues 375–401 form a helical membrane-spanning segment; the sequence is RLIMHVAFFFLTFFFIVPIAFVQSLAT. The Extracellular portion of the chain corresponds to 402 to 419; that stretch reads IEGIVKAAPFLKFIVDDK. Residues 420-445 form a helical membrane-spanning segment; sequence FMKSVIQGFLPGIALKLFLAFLPSIL. The Cytoplasmic segment spans residues 446–462; it reads MIMSKFEGFTSISSLER. A helical membrane pass occupies residues 463-485; sequence RAAFRYYIFNLVNVFLASVIAGA. At 486–504 the chain is on the extracellular side; it reads AFEQLNSFLNQSANQIPKT. The helical transmembrane segment at 505–533 threads the bilayer; sequence IGVAIPMKATFFITYIMVDGWAGVAGEIL. Topologically, residues 534-566 are cytoplasmic; the sequence is MLKPLIMFHLKNAFLVKTDKDREEAMDPGSIGF. A helical transmembrane segment spans residues 567-588; sequence NTGEPRIQLYFLLGLVYAPVTP. Residue Met-589 is a topological domain, extracellular. The chain crosses the membrane as a helical span at residues 590-605; the sequence is LLPFILVFFALAYIVY. The Cytoplasmic portion of the chain corresponds to 606–625; sequence RHQIINVYNQEYESAAAFWP. A helical membrane pass occupies residues 626 to 648; that stretch reads DVHGRVIAALVISQLLLMGLLGT. Residues 649 to 651 lie on the Extracellular side of the membrane; that stretch reads KHA. Residues 652 to 670 traverse the membrane as a helical segment; the sequence is ALAAPFLIALPVLTIGFHH. The Cytoplasmic segment spans residues 671-771; sequence FCKGRYEPAF…PSLPFSGKLV (101 aa). Residues 741–771 are disordered; sequence PTKRQSRRNTPAPSIISGDDSPSLPFSGKLV.

This sequence belongs to the CSC1 (TC 1.A.17) family. As to quaternary structure, homodimer.

The protein localises to the membrane. Its activity is regulated as follows. Activated by hyperosmotic shock after mannitol or NaCl treatment. Activated by mechanical pressure: activated in response to membrane stretch and poke. Membrane lipids play a key role in mechanosensation by acting as a wall mainly formed by lipid head groups. Acts as an osmosensitive calcium-permeable cation channel. Specifically conducts cations including Ca(2+), K(+) and Na(+) in vitro. Inactivation or closure of the channel is calcium-dependent. Mechanosensitive ion channel that converts mechanical stimuli into a flow of ions: activated in response to membrane stretch and poke. The protein is Hyperosmolality-gated Ca2+ permeable channel 1.2 of Arabidopsis thaliana (Mouse-ear cress).